A 470-amino-acid chain; its full sequence is Serine/threonine-protein kinase-like protein At1g28390 (470 aa).

The Protein kinase domain occupies 52 to 333 (FSANNFLGKG…LEVVECLKTV (282 aa)). ATP is bound by residues 58–66 (LGKGSHGRV) and lysine 81. The active-site Proton acceptor is aspartate 186. 2 positions are modified to phosphothreonine: threonine 221 and threonine 226. Tyrosine 234 bears the Phosphotyrosine mark.

This sequence belongs to the protein kinase superfamily. Ser/Thr protein kinase family.

It carries out the reaction L-seryl-[protein] + ATP = O-phospho-L-seryl-[protein] + ADP + H(+). It catalyses the reaction L-threonyl-[protein] + ATP = O-phospho-L-threonyl-[protein] + ADP + H(+). This chain is Serine/threonine-protein kinase-like protein At1g28390, found in Arabidopsis thaliana (Mouse-ear cress).